The sequence spans 348 residues: Putative zinc metalloprotease HP_0258 (348 aa).

H16 contributes to the Zn(2+) binding site. E17 is an active-site residue. Zn(2+) is bound at residue H20. Transmembrane regions (helical) follow at residues 43 to 63, 93 to 113, 247 to 267, 275 to 295, and 324 to 344; these read CFFK…GGYV, WILF…YFFL, LIMG…VGAL, MLLL…LLPI, and LWLA…FNDL. Residues 106 to 175 enclose the PDZ domain; that stretch reads AILVYFFLAL…GELVLEIERN (70 aa).

Belongs to the peptidase M50B family. It depends on Zn(2+) as a cofactor.

The protein localises to the cell inner membrane. The sequence is that of Putative zinc metalloprotease HP_0258 from Helicobacter pylori (strain ATCC 700392 / 26695) (Campylobacter pylori).